Reading from the N-terminus, the 483-residue chain is Glutamyl-tRNA(Gln) amidotransferase subunit A (483 aa).

Catalysis depends on charge relay system residues Lys76 and Ser151. Residue Ser175 is the Acyl-ester intermediate of the active site.

The protein belongs to the amidase family. GatA subfamily. As to quaternary structure, heterotrimer of A, B and C subunits.

It catalyses the reaction L-glutamyl-tRNA(Gln) + L-glutamine + ATP + H2O = L-glutaminyl-tRNA(Gln) + L-glutamate + ADP + phosphate + H(+). Functionally, allows the formation of correctly charged Gln-tRNA(Gln) through the transamidation of misacylated Glu-tRNA(Gln) in organisms which lack glutaminyl-tRNA synthetase. The reaction takes place in the presence of glutamine and ATP through an activated gamma-phospho-Glu-tRNA(Gln). The sequence is that of Glutamyl-tRNA(Gln) amidotransferase subunit A from Pseudomonas putida (strain ATCC 47054 / DSM 6125 / CFBP 8728 / NCIMB 11950 / KT2440).